The sequence spans 574 residues: MVALTEKTEKRLTIQTADIAQDTTAIRSLDWERDRFDIEFGLQNGTTYNSFLIRGEQIALVDTSHEKFRQLYFDTLTGLINPTEINYLIISHTEPDHSGLVKDLLQMAPEITVVGSKVAIQFLEDLVHQPFKRKIVKNGDRLDLGNGHEFEFVIAPNLHWPDTIFSFDHKTQTLYTCDAFGMHYCSDIVFDEDLKTIEPDFHYYYDCLMGPNARSVLSALKRMGELPSVKMIATGHGPLLYHNVEELTGRYRTWSQNQTKAETSIGVFYVSEYGYSDRLAQAIINGITKTGVGVDVVDLGAAVDLQELRELVGRCTGLVIGMSPAASAASIQGALSTILGSVNEKQAVGIFETGGGDDEPIDPLLSKFRNLGLTTAFPAIRIKQTPTENTYKLCEEAGTDLGQWVTRDRSIKAMKSLGADLDKALGRLSGGLYIITAKKGDVSSAMLASWVNQASFKPLGFSIAVAKDRAIESLMQVGDRFVLNVLEEGNYQPLMRHFLKRFAPGADRFEGVKTQPAENGAPILGDALAYMECEVVSRMDCGDHWAVYSTVYAGRVSKSEALTAVHHRKVGNHY.

The interval 43-236 is zinc metallo-hydrolase; that stretch reads QNGTTYNSFL…PSVKMIATGH (194 aa). 6 residues coordinate Fe cation: His92, Glu94, Asp96, His159, Asp178, and His236. A Flavodoxin-like domain is found at 265-409; that stretch reads IGVFYVSEYG…DLGQWVTRDR (145 aa). Residues 410-574 form a flavodoxin-reductase-like region; sequence SIKAMKSLGA…VHHRKVGNHY (165 aa).

It in the N-terminal section; belongs to the zinc metallo-hydrolase group 3 family. The protein in the C-terminal section; belongs to the flavodoxin reductase family. The cofactor is Fe cation.

Its function is as follows. Mediates electron transfer from NADH to oxygen, reducing it to water. This modular protein has 3 redox cofactors, in other organisms the same activity requires 2 or 3 proteins. The polypeptide is Putative diflavin flavoprotein A 3 (dfa3) (Nostoc sp. (strain PCC 7120 / SAG 25.82 / UTEX 2576)).